Here is a 146-residue protein sequence, read N- to C-terminus: Holo-[acyl-carrier-protein] synthase (146 aa).

Mg(2+) is bound by residues Asp-9 and Glu-63.

The protein belongs to the P-Pant transferase superfamily. AcpS family. Requires Mg(2+) as cofactor.

It is found in the cytoplasm. The catalysed reaction is apo-[ACP] + CoA = holo-[ACP] + adenosine 3',5'-bisphosphate + H(+). Functionally, transfers the 4'-phosphopantetheine moiety from coenzyme A to a Ser of acyl-carrier-protein. The protein is Holo-[acyl-carrier-protein] synthase of Burkholderia multivorans (strain ATCC 17616 / 249).